The chain runs to 391 residues: Autotransporter heptosyltransferase Aah (391 aa).

ADP-D-glycero-beta-D-manno-heptose-binding residues include T101, L102, and G103. Catalysis depends on D104, which acts as the Proton acceptor. Residues Q218, T220, K224, R251, L275, G296, and E320 each contribute to the ADP-D-glycero-beta-D-manno-heptose site. Fe(3+)-binding residues include C333, C336, C352, and C364.

It belongs to the glycosyltransferase 9 family. In terms of assembly, homododecamer composed of 6 homodimers forming a ring. It depends on Fe(3+) as a cofactor.

The protein resides in the cytoplasm. The catalysed reaction is ADP-D-glycero-beta-D-manno-heptose + L-seryl-[protein] = O-(D-glycero-alpha-D-manno-heptosyl)-L-seryl-[protein] + ADP + H(+). It catalyses the reaction ADP-L-glycero-beta-D-manno-heptose + L-seryl-[protein] = O-(L-glycero-alpha-D-manno-heptosyl)-L-seryl-[protein] + ADP + H(+). In terms of biological role, glycosylates autotransporter AIDA-I. Catalyzes the addition of both L, D-heptose and D, D-heptose sugars. Probably by glycosylating AIDA-I, involved in bacteria adhesion to host mammalian cells. The polypeptide is Autotransporter heptosyltransferase Aah (Escherichia coli).